Consider the following 616-residue polypeptide: ATP-dependent RNA helicase VAD1 (616 aa).

The interval 1–35 (MASSSTLANDDWKQGLAAPPKDLRPQTEDVTATQG) is disordered. The Q motif motif lies at 36-64 (SRFEDFGLRRELLMGIYTAGFERPSPIQE). The Helicase ATP-binding domain maps to 67-238 (IPMALTGRDI…DQHMVQPYEI (172 aa)). Position 80-87 (80-87 (AKNGTGKT)) interacts with ATP. The DEAD box signature appears at 186–189 (DEAD). In terms of domain architecture, Helicase C-terminal spans 248–408 (GVTQYYAYVE…PIPAVIDPVL (161 aa)). Positions 416–616 (EEERESPPPK…GASQSQQAQA (201 aa)) are disordered. Composition is skewed to low complexity over residues 427 to 441 (AAIA…PQQR), 458 to 500 (PAAA…NSSP), and 508 to 523 (YPQQ…AQMQ). The segment covering 529–545 (PATQPQASAQIPVQGQT) has biased composition (polar residues). Low complexity-rich tracts occupy residues 550 to 579 (PRAQ…PNTG) and 606 to 616 (AGASQSQQAQA).

It belongs to the DEAD box helicase family. DDX6/DHH1 subfamily.

The protein resides in the cytoplasm. It localises to the P-body. The enzyme catalyses ATP + H2O = ADP + phosphate + H(+). ATP-dependent RNA helicase involved in mRNA turnover, and more specifically in mRNA decapping. Is involved in G1/S DNA-damage checkpoint recovery, probably through the regulation of the translational status of a subset of mRNAs. May also have a role in translation and mRNA nuclear export. Blocks autophagy in nutrient-rich conditions by, at least partly, binding and repressing the expression of a set of ATG genes, including ATG3, ATG7, ATG8, ATG19, ATG20 and ATG22. VAD1-mediated repression of autophagy is regulated by TOR-dependent phosphorylation of the decapping enzyme DCP2. Regulates multiple virulence-associated genes. Repression of autophagy by VAD1 also regulates the pathogenesis. This Cryptococcus neoformans var. grubii serotype A (strain H99 / ATCC 208821 / CBS 10515 / FGSC 9487) (Filobasidiella neoformans var. grubii) protein is ATP-dependent RNA helicase VAD1.